A 321-amino-acid chain; its full sequence is NADH-ubiquinone oxidoreductase chain 1 (321 aa).

8 helical membrane passes run 2 to 22, 71 to 91, 104 to 124, 148 to 168, 173 to 193, 224 to 244, 255 to 275, and 295 to 315; these read LVMLTSTLILVLMVLLAVAFL, ALFIAAPIMALTLALSLWMFI, LLVILAISSLSVYASLGSGWA, LGLILLCLIILTGGFSLQAFI, HTWFLLSSWPLAAMWFVSTLA, LFFLAEYSNILFMNTLTAIMF, ILPIINVMMKATPLIILFLWI, and FLPLNLALFTLQLSLAVSLGG.

This sequence belongs to the complex I subunit 1 family.

The protein localises to the mitochondrion inner membrane. It carries out the reaction a ubiquinone + NADH + 5 H(+)(in) = a ubiquinol + NAD(+) + 4 H(+)(out). In terms of biological role, core subunit of the mitochondrial membrane respiratory chain NADH dehydrogenase (Complex I) that is believed to belong to the minimal assembly required for catalysis. Complex I functions in the transfer of electrons from NADH to the respiratory chain. The immediate electron acceptor for the enzyme is believed to be ubiquinone. This chain is NADH-ubiquinone oxidoreductase chain 1 (MT-ND1), found in Lampetra fluviatilis (European river lamprey).